Reading from the N-terminus, the 1016-residue chain is Probably inactive leucine-rich repeat receptor-like protein kinase At3g28040 (1016 aa).

A signal peptide spans 1-26 (MGKQRRTMISFTLFLTLTMMSSLING). Residues 27–646 (DTDSIQLNDD…FHRRMFLSVS (620 aa)) are Extracellular-facing. LRR repeat units lie at residues 102-124 (RLKV…SNNN), 125-147 (HLQK…LGSI), 149-171 (SLQH…LFNN), 174-196 (SLRY…LFRC), 198-219 (VLNS…VSGI), 224-245 (RLRA…GILS), 248-270 (NLKE…IGLC), 272-295 (HLNR…QKLK), 296-318 (SLNH…IGDM), 320-342 (GLVH…ISNL), 344-366 (SLKD…LESC), 368-390 (ELMI…FFDL), 391-413 (GLQE…SSRL), 416-438 (SLIR…VGLF), 440-462 (HMRY…IEFL), 464-486 (NLTV…ICES), 488-510 (SLQI…IGNC), 512-535 (SLKL…SNLQ), 536-559 (ELKI…GDLQ), and 560-582 (NLLL…DVFQ). 3 N-linked (GlcNAc...) asparagine glycosylation sites follow: Asn112, Asn135, and Asn171. A glycan (N-linked (GlcNAc...) asparagine) is linked at Asn203. An N-linked (GlcNAc...) asparagine glycan is attached at Asn349. Asn445, Asn464, Asn509, and Asn522 each carry an N-linked (GlcNAc...) asparagine glycan. The N-linked (GlcNAc...) asparagine glycan is linked to Asn565. A helical membrane pass occupies residues 647-667 (VIVAISAAILIFSGVIIITLL). The Cytoplasmic portion of the chain corresponds to 668 to 1016 (NASVRRRLAF…PVPHRIMDSF (349 aa)). One can recognise a Protein kinase domain in the interval 726–1013 (LNKASRIGEG…INSPVPHRIM (288 aa)). Residues 732-740 (IGEGVFGTV) and Lys755 contribute to the ATP site. 2 positions are modified to phosphotyrosine: Tyr841 and Tyr898.

It belongs to the protein kinase superfamily. Ser/Thr protein kinase family.

Its subcellular location is the membrane. The polypeptide is Probably inactive leucine-rich repeat receptor-like protein kinase At3g28040 (Arabidopsis thaliana (Mouse-ear cress)).